A 174-amino-acid polypeptide reads, in one-letter code: Dual-action ribosomal maturation protein DarP (174 aa).

The protein belongs to the DarP family.

It localises to the cytoplasm. Functionally, member of a network of 50S ribosomal subunit biogenesis factors which assembles along the 30S-50S interface, preventing incorrect 23S rRNA structures from forming. Promotes peptidyl transferase center (PTC) maturation. This is Dual-action ribosomal maturation protein DarP from Pseudomonas paraeruginosa (strain DSM 24068 / PA7) (Pseudomonas aeruginosa (strain PA7)).